The primary structure comprises 146 residues: Snaclec anticoagulant protein subunit B (146 aa).

The N-terminal stretch at 1–23 is a signal peptide; that stretch reads MGRFIFVSFGLLVLFLSLSGTAA. The C-type lectin domain occupies 24 to 146; it reads DCPSDWSSYE…IANFVCEFQA (123 aa). Cystine bridges form between cysteine 25–cysteine 36, cysteine 53–cysteine 142, and cysteine 119–cysteine 134. Ca(2+) is bound by residues serine 64, glutamine 66, and glutamate 70. Residue glutamate 143 coordinates Ca(2+).

This sequence belongs to the snaclec family. Heterodimer with subunit A of agkisacutacin or AaACP; disulfide-linked. Expressed by the venom gland.

It localises to the secreted. Anticoagulant protein which binds to the gamma-carboxyglutamic acid-domain regions of factors IX and factor X in the presence of calcium with a 1 to 1 stoichiometry. Also inhibits platelet aggregation by binding to platelet glycoprotein Ibalpha (GP1BA) and functioning as a blocker of vWF. Is devoid of hemorrhagic and lethal activities. Possesses antithrombotic and thrombolytic activities. Also hydrolyzes the Aalpha-chain of fibrinogen. Does not affect the Bbeta-chain and the gamma chain. This chain is Snaclec anticoagulant protein subunit B, found in Deinagkistrodon acutus (Hundred-pace snake).